The chain runs to 137 residues: Large ribosomal subunit protein uL16 (137 aa).

It belongs to the universal ribosomal protein uL16 family. Part of the 50S ribosomal subunit.

Binds 23S rRNA and is also seen to make contacts with the A and possibly P site tRNAs. The chain is Large ribosomal subunit protein uL16 from Stenotrophomonas maltophilia (strain R551-3).